Here is a 141-residue protein sequence, read N- to C-terminus: Large ribosomal subunit protein uL11 (141 aa).

It belongs to the universal ribosomal protein uL11 family. In terms of assembly, part of the ribosomal stalk of the 50S ribosomal subunit. Interacts with L10 and the large rRNA to form the base of the stalk. L10 forms an elongated spine to which L12 dimers bind in a sequential fashion forming a multimeric L10(L12)X complex. One or more lysine residues are methylated.

In terms of biological role, forms part of the ribosomal stalk which helps the ribosome interact with GTP-bound translation factors. The polypeptide is Large ribosomal subunit protein uL11 (Latilactobacillus sakei subsp. sakei (strain 23K) (Lactobacillus sakei subsp. sakei)).